We begin with the raw amino-acid sequence, 507 residues long: MTVFSRPGSAGALMSYESRYQNFIGGQWVAPVHGRYFENPTPVTGQPFCEVPRSDAADIDKALDAAHAAAPGWGKTAPAERAAILNMIADRIDKNAAALAVAEVWDNGKPVREALAADIPLAVDHFRYFAAAIRAQEGALSQIDEDTVAYHFHEPLGVVGQIIPWNFPILMAAWKLAPALAAGNTAVLKPAEQTPASVLYLMSLIGDLLPPGVVNVVNGFGAEAGKPLASSDRIAKVAFTGETTTGRLIMQYASHNLIPVTLELGGKSPNIFFADVLAAHDDFCDKALEGFTMFALNQGEVCTCPSRSLIQADIYDEFLELAAIRTKAVRQGDPLDTETMLGSQASNDQLEKVLSYIEIGKQEGAVIIAGGERAELGGDLSGGYYMQPTIFTGTNNMRIFKEEIFGPVVAVTSFTDYDDAIGIANDTLYGLGAGVWSRDGNTAYRAGRDIQAGRVWVNCYHLYPAHAAFGGYKQSGIGREGHQMMLQHYQHTKNLLVSYSDKALGFF.

Residue 219-225 (GFGAEAG) participates in NAD(+) binding. Active-site residues include E263 and C302.

Belongs to the aldehyde dehydrogenase family.

It carries out the reaction an aldehyde + NAD(+) + H2O = a carboxylate + NADH + 2 H(+). The polypeptide is Probable aldehyde dehydrogenase (Mycobacterium bovis (strain ATCC BAA-935 / AF2122/97)).